The primary structure comprises 424 residues: MAIRARSSSYAAAAVALALALASVAAVAGEVFFQEKFEDGWESRWVKSEWKKDENMAGEWNHTSGKWNGDPEDKGIQTSEDYRFYAISAEYPEFSNKDKTLVLQFSVKHEQKLDCGGGYVKLLGGDVDQKKFGGDTPYSIMFGPDICGYSTKKVHTIFTKNDKNHLIKKDVPCETDQLSHVYTLIIHPDATYTILIDNVEKQSGSIYEHWDILPPKQIKDPEAKKPEDWDDKEYIPDPEDKKPEGYDDIPKEIPDPDAKKPEDWDDEEDGEWTAPTIPNPEYKGPWKQKKIKNPNYQGKWKAPMIDNPDFKDDPYIYAFDSLKYIGIELWQVKSGTLFDNFLITDDPELAKTFAEETWGKHKDAEKAAFDEAEKKKEEEEAAKAGEDDDDLDDEDAEDEDKADEKADSDAEDGKDSDDEKHDEL.

The first 29 residues, 1–29 (MAIRARSSSYAAAAVALALALASVAAVAG), serve as a signal peptide directing secretion. N-linked (GlcNAc...) asparagine glycosylation is present at N61. C115 and C147 form a disulfide bridge. Positions 119, 121, 138, and 145 each coordinate an alpha-D-glucoside. Repeat copies occupy residues 201-212 (KQSGSIYEHWDI), 220-231 (DPEAKKPEDWDD), 237-248 (DPEDKKPEGYDD), 255-266 (DPDAKKPEDWDD), 270-280 (GEWTAPTIPNP), 284-294 (GPWKQKKIKNP), and 298-308 (GKWKAPMIDNP). A 4 X approximate repeats region spans residues 201–266 (KQSGSIYEHW…DAKKPEDWDD (66 aa)). Residues 217–262 (QIKDPEAKKPEDWDDKEYIPDPEDKKPEGYDDIPKEIPDPDAKKPE) are compositionally biased toward basic and acidic residues. Residues 217–289 (QIKDPEAKKP…PEYKGPWKQK (73 aa)) form a disordered region. Positions 270-308 (GEWTAPTIPNPEYKGPWKQKKIKNPNYQGKWKAPMIDNP) are 3 X approximate repeats. E328 is an an alpha-D-glucoside binding site. Residues 356-385 (ETWGKHKDAEKAAFDEAEKKKEEEEAAKAG) are compositionally biased toward basic and acidic residues. Residues 356–424 (ETWGKHKDAE…DSDDEKHDEL (69 aa)) form a disordered region. Acidic residues predominate over residues 386-401 (EDDDDLDDEDAEDEDK). Positions 402–424 (ADEKADSDAEDGKDSDDEKHDEL) are enriched in basic and acidic residues. Residues 421 to 424 (HDEL) carry the Prevents secretion from ER motif.

It belongs to the calreticulin family. In terms of processing, phosphorylated.

Its subcellular location is the endoplasmic reticulum lumen. Functionally, molecular calcium-binding chaperone promoting folding, oligomeric assembly and quality control in the ER via the calreticulin/calnexin cycle. This lectin may interact transiently with almost all of the monoglucosylated glycoproteins that are synthesized in the ER. This chain is Calreticulin, found in Oryza sativa subsp. japonica (Rice).